Here is a 708-residue protein sequence, read N- to C-terminus: Wall-associated receptor kinase-like 14 (708 aa).

The first 42 residues, 1 to 42, serve as a signal peptide directing secretion; that stretch reads MLRSIFDFNQRSTKMVMISHKLDLILVFIIVIGGSIFRRVSA. Residues N43, N88, N101, N131, N158, N167, and N184 are each glycosylated (N-linked (GlcNAc...) asparagine). At 43 to 285 the chain is on the extracellular side; it reads NFTVPCNGRC…WRHCRSNLIT (243 aa). The helical transmembrane segment at 286–306 threads the bilayer; that stretch reads IVGGTVGGAFLLAALAFFFFC. The Cytoplasmic portion of the chain corresponds to 307–708; the sequence is KRRRSTPLRS…TNTLLGNIPR (402 aa). Positions 348-629 constitute a Protein kinase domain; sequence FSEKQKLGIG…LEQIRLSGWI (282 aa). Residues 354-362 and K376 each bind ATP; that span reads LGIGAYGTV. The active-site Proton acceptor is the D472. Disordered stretches follow at residues 636–659 and 686–708; these read SPAGSLRSSDRGSERSVKQSSIGS and VQDPWLSAQSSPSTNTLLGNIPR. Over residues 643–652 the composition is skewed to basic and acidic residues; the sequence is SSDRGSERSV. Positions 692-708 are enriched in polar residues; the sequence is SAQSSPSTNTLLGNIPR.

It belongs to the protein kinase superfamily. Ser/Thr protein kinase family.

The protein localises to the membrane. It catalyses the reaction L-seryl-[protein] + ATP = O-phospho-L-seryl-[protein] + ADP + H(+). It carries out the reaction L-threonyl-[protein] + ATP = O-phospho-L-threonyl-[protein] + ADP + H(+). In terms of biological role, serine/threonine-protein kinase that may function as a signaling receptor of extracellular matrix component. The sequence is that of Wall-associated receptor kinase-like 14 (WAKL14) from Arabidopsis thaliana (Mouse-ear cress).